Here is a 288-residue protein sequence, read N- to C-terminus: ATP phosphoribosyltransferase (288 aa).

The protein belongs to the ATP phosphoribosyltransferase family. Long subfamily. Mg(2+) is required as a cofactor.

It localises to the cytoplasm. It carries out the reaction 1-(5-phospho-beta-D-ribosyl)-ATP + diphosphate = 5-phospho-alpha-D-ribose 1-diphosphate + ATP. The protein operates within amino-acid biosynthesis; L-histidine biosynthesis; L-histidine from 5-phospho-alpha-D-ribose 1-diphosphate: step 1/9. With respect to regulation, feedback inhibited by histidine. Catalyzes the condensation of ATP and 5-phosphoribose 1-diphosphate to form N'-(5'-phosphoribosyl)-ATP (PR-ATP). Has a crucial role in the pathway because the rate of histidine biosynthesis seems to be controlled primarily by regulation of HisG enzymatic activity. This chain is ATP phosphoribosyltransferase, found in Methanococcus maripaludis (strain DSM 14266 / JCM 13030 / NBRC 101832 / S2 / LL).